Reading from the N-terminus, the 454-residue chain is Histidine--tRNA ligase (454 aa).

The protein belongs to the class-II aminoacyl-tRNA synthetase family. As to quaternary structure, homodimer.

The protein resides in the cytoplasm. The enzyme catalyses tRNA(His) + L-histidine + ATP = L-histidyl-tRNA(His) + AMP + diphosphate + H(+). This chain is Histidine--tRNA ligase, found in Bacteroides fragilis (strain ATCC 25285 / DSM 2151 / CCUG 4856 / JCM 11019 / LMG 10263 / NCTC 9343 / Onslow / VPI 2553 / EN-2).